The primary structure comprises 429 residues: UDP-N-acetylglucosamine 1-carboxyvinyltransferase (429 aa).

22–23 (KN) serves as a coordination point for phosphoenolpyruvate. Arg102 provides a ligand contact to UDP-N-acetyl-alpha-D-glucosamine. Cys126 serves as the catalytic Proton donor. The residue at position 126 (Cys126) is a 2-(S-cysteinyl)pyruvic acid O-phosphothioketal. UDP-N-acetyl-alpha-D-glucosamine-binding positions include 171 to 174 (KVSV), Asp316, and Ile338.

The protein belongs to the EPSP synthase family. MurA subfamily.

It is found in the cytoplasm. The enzyme catalyses phosphoenolpyruvate + UDP-N-acetyl-alpha-D-glucosamine = UDP-N-acetyl-3-O-(1-carboxyvinyl)-alpha-D-glucosamine + phosphate. Its pathway is cell wall biogenesis; peptidoglycan biosynthesis. In terms of biological role, cell wall formation. Adds enolpyruvyl to UDP-N-acetylglucosamine. This Xanthobacter autotrophicus (strain ATCC BAA-1158 / Py2) protein is UDP-N-acetylglucosamine 1-carboxyvinyltransferase.